The primary structure comprises 410 residues: Translation initiation factor 2 subunit gamma (410 aa).

The region spanning 6 to 203 is the tr-type G domain; it reads QSEVNIGMVG…AIQEFIPTPK (198 aa). A G1 region spans residues 15 to 22; sequence GHVDHGKT. D18, T22, G43, and S45 together coordinate Mg(2+). 18–23 contacts GTP; it reads DHGKTS. Residues 43–47 form a G2 region; sequence GISIR. Residues C58, C61, C73, and C76 each contribute to the Zn(2+) site. A G3 region spans residues 90 to 93; the sequence is DAPG. GTP is bound by residues 146-149 and 181-183; these read NKID and SAH. The G4 stretch occupies residues 146 to 149; it reads NKID. The tract at residues 181–183 is G5; it reads SAH.

The protein belongs to the TRAFAC class translation factor GTPase superfamily. Classic translation factor GTPase family. EIF2G subfamily. Heterotrimer composed of an alpha, a beta and a gamma chain. Mg(2+) is required as a cofactor.

It catalyses the reaction GTP + H2O = GDP + phosphate + H(+). EIF-2 functions in the early steps of protein synthesis by forming a ternary complex with GTP and initiator tRNA. The protein is Translation initiation factor 2 subunit gamma of Methanococcus vannielii (strain ATCC 35089 / DSM 1224 / JCM 13029 / OCM 148 / SB).